The following is a 523-amino-acid chain: Bifunctional purine biosynthesis protein PurH (523 aa).

Positions 4 to 152 (DHIRRPIRRA…KNHPSVAVVT (149 aa)) constitute an MGS-like domain.

This sequence belongs to the PurH family.

The catalysed reaction is (6R)-10-formyltetrahydrofolate + 5-amino-1-(5-phospho-beta-D-ribosyl)imidazole-4-carboxamide = 5-formamido-1-(5-phospho-D-ribosyl)imidazole-4-carboxamide + (6S)-5,6,7,8-tetrahydrofolate. It catalyses the reaction IMP + H2O = 5-formamido-1-(5-phospho-D-ribosyl)imidazole-4-carboxamide. It functions in the pathway purine metabolism; IMP biosynthesis via de novo pathway; 5-formamido-1-(5-phospho-D-ribosyl)imidazole-4-carboxamide from 5-amino-1-(5-phospho-D-ribosyl)imidazole-4-carboxamide (10-formyl THF route): step 1/1. The protein operates within purine metabolism; IMP biosynthesis via de novo pathway; IMP from 5-formamido-1-(5-phospho-D-ribosyl)imidazole-4-carboxamide: step 1/1. This Mycobacterium ulcerans (strain Agy99) protein is Bifunctional purine biosynthesis protein PurH.